We begin with the raw amino-acid sequence, 690 residues long: Glycine--tRNA ligase beta subunit (690 aa).

Belongs to the class-II aminoacyl-tRNA synthetase family. In terms of assembly, tetramer of two alpha and two beta subunits.

The protein resides in the cytoplasm. It carries out the reaction tRNA(Gly) + glycine + ATP = glycyl-tRNA(Gly) + AMP + diphosphate. The polypeptide is Glycine--tRNA ligase beta subunit (Proteus mirabilis (strain HI4320)).